The following is a 599-amino-acid chain: NADH-quinone oxidoreductase subunit C/D (599 aa).

Polar residues predominate over residues 1 to 15 (MTDLTAQELAQPSWQ). The disordered stretch occupies residues 1–21 (MTDLTAQELAQPSWQTRDHQD). The NADH dehydrogenase I subunit C stretch occupies residues 1–189 (MTDLTAQELA…DPFELTKQKE (189 aa)). Residues 213–599 (DFMFLNLGPN…IDFVMSDVDR (387 aa)) form an NADH dehydrogenase I subunit D region.

In the N-terminal section; belongs to the complex I 30 kDa subunit family. It in the C-terminal section; belongs to the complex I 49 kDa subunit family. NDH-1 is composed of 13 different subunits. Subunits NuoB, CD, E, F, and G constitute the peripheral sector of the complex.

It localises to the cell inner membrane. It carries out the reaction a quinone + NADH + 5 H(+)(in) = a quinol + NAD(+) + 4 H(+)(out). Its function is as follows. NDH-1 shuttles electrons from NADH, via FMN and iron-sulfur (Fe-S) centers, to quinones in the respiratory chain. The immediate electron acceptor for the enzyme in this species is believed to be ubiquinone. Couples the redox reaction to proton translocation (for every two electrons transferred, four hydrogen ions are translocated across the cytoplasmic membrane), and thus conserves the redox energy in a proton gradient. The chain is NADH-quinone oxidoreductase subunit C/D from Erwinia tasmaniensis (strain DSM 17950 / CFBP 7177 / CIP 109463 / NCPPB 4357 / Et1/99).